A 319-amino-acid polypeptide reads, in one-letter code: tRNA uridine(34) hydroxylase (319 aa).

Residues 124-218 (LDEDTVILDA…YGKNEETKGE (95 aa)) form the Rhodanese domain. Catalysis depends on cysteine 178, which acts as the Cysteine persulfide intermediate.

This sequence belongs to the TrhO family.

It catalyses the reaction uridine(34) in tRNA + AH2 + O2 = 5-hydroxyuridine(34) in tRNA + A + H2O. Its function is as follows. Catalyzes oxygen-dependent 5-hydroxyuridine (ho5U) modification at position 34 in tRNAs. This is tRNA uridine(34) hydroxylase from Listeria monocytogenes serotype 4a (strain HCC23).